A 645-amino-acid polypeptide reads, in one-letter code: Cyclin-D-binding Myb-like transcription factor 1 (645 aa).

Disordered stretches follow at residues 34–71 (QNDG…STEY) and 95–119 (RDEE…KKGE). Composition is skewed to acidic residues over residues 36-46 (DGEDLGSDETT) and 95-105 (RDEELESDDLS). Residues 219-257 (GKYTDEEINKLKELRQKHGNDWATIGSALGRSASSVKDR) form the Myb-like 1 domain. Residues 262 to 327 (KDTCNTGKWT…KWLNYLNWKQ (66 aa)) form the HTH myb-type domain. Positions 300–323 (WASVAELVGTRSEKQCRSKWLNYL) form a DNA-binding region, H-T-H motif. The 50-residue stretch at 333–382 (WTKEDDINLVRRIAELEVEDENEINWDILASGWSSVRSPQWLRSKWWTIK) folds into the Myb-like 2 domain. Positions 568–645 (VKEEPSENQT…ILENQEEGSN (78 aa)) are disordered. Basic and acidic residues predominate over residues 587–597 (EQSKQGEKTLD). Polar residues predominate over residues 615 to 625 (IPTNEDISSDS).

Belongs to the DMTF1 family.

It is found in the nucleus. In terms of biological role, transcriptional activator which activates the CDKN2A/ARF locus in response to Ras-Raf signaling, thereby promoting p53/TP53-dependent growth arrest. Binds to the consensus sequence 5'-CCCG[GT]ATGT-3'. In Danio rerio (Zebrafish), this protein is Cyclin-D-binding Myb-like transcription factor 1 (dmtf1).